A 24-amino-acid chain; its full sequence is Humanin (24 aa).

The interval 1–12 (MAPRGFSCLLLL) is sufficient to interact with BID and BIM and to suppress BID and BIM activity. Residues 3-19 (PRGFSCLLLLTSEIDLP) form a sufficient for neuroprotective activity region. A sufficient to interact with MPP8 region spans residues 5 to 12 (GFSCLLLL). Required for secretion stretches follow at residues 9–11 (LLL) and 19–20 (PV).

Homodimer. Interacts with amyloid-beta protein 42 (Abeta42); the interaction prevents Abeta42 fibril formation. Interacts with BAX; forms fibers with BAX which results in BAX conformational changes and sequestering of BAX into the fibers, preventing BAX activation. Interacts with both full-length BID and cleaved BID p15; forms fibers with BID which results in BID conformational changes and sequestering of BID into the fibers, preventing BID activation. Interacts with BIM isoform BimEL but not with BIM isoforms BimL or BimS; the interaction prevents BIM-induced apoptosis. Interacts with IGFBP3; competes with importin KPNB1 for binding to IGFBP3, blocking IGFBP3 nuclear import. Interacts with TRIM11. Interacts with MPP8. In terms of tissue distribution, expressed in testis, seminal plasma and sperm (at protein level). Higher seminal plasma levels are associated with normospermia than with oligospermia, asthenospermia or oligoasthenospermia (at protein level). Higher sperm levels are associated with normospermia than with asthenospermia (at protein level). Expressed in retinal epithelial cells (at protein level). Expressed in the heart, skeletal muscle, kidney and liver. Lesser but significant expression is observed in the brain and the gastrointestinal tract. Expressed in the AD brain, where it is found in some of the large intact neurons of the occipital lobes and small and round reactive glial cells in the hippocampus.

Its subcellular location is the secreted. The protein resides in the cytoplasm. It is found in the cell projection. The protein localises to the cilium. It localises to the flagellum. Its subcellular location is the nucleus. The protein resides in the mitochondrion. Functionally, plays a role as a neuroprotective factor. Protects against neuronal cell death induced by multiple different familial Alzheimer disease genes and amyloid-beta proteins in Alzheimer disease. Mediates its neuroprotective effect by interacting with a receptor complex composed of IL6ST/GP130, IL27RA/WSX1 and CNTFR. Also acts as a ligand for G-protein coupled receptors FPR2/FPRL1 and FPR3/FPRL2. Inhibits amyloid-beta protein 40 fibril formation. Also inhibits amyloid-beta protein 42 fibril formation. Suppresses apoptosis by binding to BAX and preventing the translocation of BAX from the cytosol to mitochondria. Also suppresses apoptosis by binding to BID and inhibiting the interaction of BID with BAX and BAK which prevents oligomerization of BAX and BAK and suppresses release of apoptogenic proteins from mitochondria. Forms fibers with BAX and also with BID, inducing BAX and BID conformational changes and sequestering them into the fibers which prevents their activation. Can also suppress apoptosis by interacting with BIM isoform BimEL, inhibiting BimEL-induced activation of BAX, blocking oligomerization of BAX and BAK, and preventing release of apoptogenic proteins from mitochondria. Plays a role in up-regulation of anti-apoptotic protein BIRC6/APOLLON, leading to inhibition of neuronal cell death. Binds to IGFBP3 and specifically blocks IGFBP3-induced cell death. Competes with importin KPNB1 for binding to IGFBP3 which is likely to block IGFBP3 nuclear import. Induces chemotaxis of mononuclear phagocytes via FPR2/FPRL1. Reduces aggregation and fibrillary formation by suppressing the effect of APP on mononuclear phagocytes and acts by competitively inhibiting the access of FPR2 to APP. Protects retinal pigment epithelium (RPE) cells against oxidative stress-induced and endoplasmic reticulum (ER) stress-induced apoptosis. Promotes mitochondrial biogenesis in RPE cells following oxidative stress and promotes STAT3 phosphorylation which leads to inhibition of CASP3 release. Also reduces CASP4 levels in RPE cells, suppresses ER stress-induced mitochondrial superoxide production and plays a role in up-regulation of mitochondrial glutathione. Reduces testicular hormone deprivation-induced apoptosis of germ cells at the nonandrogen-sensitive stages of the seminiferous epithelium cycle. Protects endothelial cells against free fatty acid-induced inflammation by suppressing oxidative stress, reducing expression of TXNIP and inhibiting activation of the NLRP3 inflammasome which inhibits expression of pro-inflammatory cytokines IL1B and IL18. Protects against high glucose-induced endothelial cell dysfunction by mediating activation of ERK5 which leads to increased expression of transcription factor KLF2 and prevents monocyte adhesion to endothelial cells. Inhibits the inflammatory response in astrocytes. Increases the expression of PPARGC1A/PGC1A in pancreatic beta cells which promotes mitochondrial biogenesis. Increases insulin sensitivity. The chain is Humanin from Homo sapiens (Human).